Consider the following 578-residue polypeptide: Polypeptide N-acetylgalactosaminyltransferase 4 (578 aa).

The Cytoplasmic segment spans residues 1 to 12 (MAVRWTWAGKSC). Residues 13-35 (LLLALLTLAYILVEFSVSTLYAS) form a helical; Signal-anchor for type II membrane protein membrane-spanning segment. Residues 36–578 (PGAGGARELG…DKNQLWRFEK (543 aa)) lie on the Lumenal side of the membrane. Cystine bridges form between cysteine 124-cysteine 357, cysteine 348-cysteine 421, cysteine 457-cysteine 477, cysteine 503-cysteine 518, and cysteine 547-cysteine 565. Positions 134–243 (LPTTSVIIAF…TGWLEPLLER (110 aa)) are catalytic subdomain A. Residues aspartate 175 and arginine 204 each coordinate substrate. Mn(2+) contacts are provided by aspartate 227 and histidine 229. Positions 303–365 (PIRSPTMAGG…PCSHVGHVFP (63 aa)) are catalytic subdomain B. Tryptophan 334 is a substrate binding site. A Mn(2+)-binding site is contributed by histidine 362. A substrate-binding site is contributed by tyrosine 370. In terms of domain architecture, Ricin B-type lectin spans 444 to 577 (WHGAIRSMGI…LDKNQLWRFE (134 aa)). Residue asparagine 471 is glycosylated (N-linked (GlcNAc...) asparagine).

This sequence belongs to the glycosyltransferase 2 family. GalNAc-T subfamily. Requires Mn(2+) as cofactor. Highly expressed in sublingual gland, stomach, colon, small intestine and cervix. Expressed at intermediate levels in kidney, ovary, lung and uterus. Weakly expressed in spleen, liver, heart and brain. Not expressed in submandibular and parotid glands, skeletal muscle and testis.

The protein resides in the golgi apparatus membrane. The enzyme catalyses L-seryl-[protein] + UDP-N-acetyl-alpha-D-galactosamine = a 3-O-[N-acetyl-alpha-D-galactosaminyl]-L-seryl-[protein] + UDP + H(+). The catalysed reaction is L-threonyl-[protein] + UDP-N-acetyl-alpha-D-galactosamine = a 3-O-[N-acetyl-alpha-D-galactosaminyl]-L-threonyl-[protein] + UDP + H(+). It functions in the pathway protein modification; protein glycosylation. In terms of biological role, catalyzes the initial reaction in O-linked oligosaccharide biosynthesis, the transfer of an N-acetyl-D-galactosamine residue to a serine or threonine residue on the protein receptor. Has a highest activity toward EA2 peptide substrate and a much lower activity with EPO-T, Muc2, Muc1a, Muc1b. This is Polypeptide N-acetylgalactosaminyltransferase 4 (Galnt4) from Mus musculus (Mouse).